Reading from the N-terminus, the 382-residue chain is RNA binding protein fox-1 homolog 1-like (382 aa).

Disordered stretches follow at residues 34-79 (QEAG…AAHP) and 94-148 (GPQH…QPKR). Over residues 49 to 65 (YAPPPSYPPPGQAPPTP) the composition is skewed to pro residues. The segment covering 101–110 (ESITASNTDD) has biased composition (polar residues). The RRM domain occupies 147–223 (KRLHVSNIPF…RKIEVNNATA (77 aa)).

Expressed during muscle development in adaxial cells, somites, cardiac precursors, finbuds and jaw muscle cells.

The protein localises to the nucleus. Functionally, RNA-binding protein that regulates alternative splicing events by binding to 5'-GCAUG-3' elements. Regulates alternative splicing of tissue-specific exons. The protein is RNA binding protein fox-1 homolog 1-like (rbfox1l) of Danio rerio (Zebrafish).